Here is a 98-residue protein sequence, read N- to C-terminus: Small ribosomal subunit protein bS20 (98 aa).

A compositionally biased stretch (basic residues) spans 1 to 12; sequence MAPKKTTKKGGP. The tract at residues 1 to 20 is disordered; it reads MAPKKTTKKGGPQKRPSAEK.

Belongs to the bacterial ribosomal protein bS20 family.

Functionally, binds directly to 16S ribosomal RNA. The polypeptide is Small ribosomal subunit protein bS20 (Chlamydia caviae (strain ATCC VR-813 / DSM 19441 / 03DC25 / GPIC) (Chlamydophila caviae)).